We begin with the raw amino-acid sequence, 146 residues long: Acidic phospholipase A2 C (146 aa).

An N-terminal signal peptide occupies residues 1–21 (MNPAHLLILAAVCVSPLGASS). Positions 22–27 (NRPMPL) are excised as a propeptide. Disulfide bonds link Cys-38–Cys-98, Cys-53–Cys-145, Cys-55–Cys-71, Cys-70–Cys-126, Cys-77–Cys-119, Cys-87–Cys-112, and Cys-105–Cys-117. Positions 54, 56, and 58 each coordinate Ca(2+). His-74 is a catalytic residue. Asp-75 is a binding site for Ca(2+). Asp-120 is a catalytic residue.

The protein belongs to the phospholipase A2 family. Group I subfamily. D49 sub-subfamily. Ca(2+) is required as a cofactor. In terms of tissue distribution, expressed by the venom gland.

Its subcellular location is the secreted. It carries out the reaction a 1,2-diacyl-sn-glycero-3-phosphocholine + H2O = a 1-acyl-sn-glycero-3-phosphocholine + a fatty acid + H(+). PLA2 catalyzes the calcium-dependent hydrolysis of the 2-acyl groups in 3-sn-phosphoglycerides. The polypeptide is Acidic phospholipase A2 C (Naja sputatrix (Malayan spitting cobra)).